The following is a 494-amino-acid chain: Aldehyde dehydrogenase family 7 member A1 (494 aa).

247–252 serves as a coordination point for NAD(+); sequence GSSKVG. The active-site Proton acceptor is the glutamate 269. Cysteine 303 serves as the catalytic Nucleophile.

Belongs to the aldehyde dehydrogenase family. As to quaternary structure, homotetramer.

The enzyme catalyses an aldehyde + NAD(+) + H2O = a carboxylate + NADH + 2 H(+). This chain is Aldehyde dehydrogenase family 7 member A1 (BTG-26), found in Brassica napus (Rape).